Here is a 78-residue protein sequence, read N- to C-terminus: Large ribosomal subunit protein bL28 (78 aa).

The protein belongs to the bacterial ribosomal protein bL28 family.

The polypeptide is Large ribosomal subunit protein bL28 (Flavobacterium psychrophilum (strain ATCC 49511 / DSM 21280 / CIP 103535 / JIP02/86)).